The following is a 101-amino-acid chain: MAKESMKAREVKRAKLVAKFATKRAELKATISNVNSSDEERWDAVLKLQQLPRDSARTRQQNRCRITGRPHGFLRKFGLSRIKLREAAMRGEVPGLKKASW.

The protein belongs to the universal ribosomal protein uS14 family. As to quaternary structure, part of the 30S ribosomal subunit. Contacts proteins S3 and S10.

Functionally, binds 16S rRNA, required for the assembly of 30S particles and may also be responsible for determining the conformation of the 16S rRNA at the A site. The sequence is that of Small ribosomal subunit protein uS14 from Pseudoalteromonas atlantica (strain T6c / ATCC BAA-1087).